Reading from the N-terminus, the 182-residue chain is UPF0149 protein PM1723 (182 aa).

Belongs to the UPF0149 family.

This chain is UPF0149 protein PM1723, found in Pasteurella multocida (strain Pm70).